We begin with the raw amino-acid sequence, 410 residues long: Probable protein S-acyltransferase 6 (410 aa).

2 helical membrane passes run 45-65 (LGLTISLIVAPVTIFCIFVAS) and 76-96 (GVSIILVAVVFTIYDLILLML). The disordered stretch occupies residues 108–129 (NSHPPEPEVVDGNTGSGTSQTP). Positions 147 to 197 (KYCDTCMLYRPPRCSHCSICNNCVERFDHHCPWVGQCIAQRNYRFFFMFVF) constitute a DHHC domain. The active-site S-palmitoyl cysteine intermediate is cysteine 177. 2 helical membrane passes run 191 to 211 (FFFMFVFSTTLLCVYVFAFCC) and 235 to 255 (SIALILYTFISTFFVGGLTCF). At serine 325 the chain carries Phosphoserine.

It belongs to the DHHC palmitoyltransferase family.

The protein localises to the cell membrane. It catalyses the reaction L-cysteinyl-[protein] + hexadecanoyl-CoA = S-hexadecanoyl-L-cysteinyl-[protein] + CoA. In terms of biological role, palmitoyl acyltransferase. The chain is Probable protein S-acyltransferase 6 (PAT06) from Arabidopsis thaliana (Mouse-ear cress).